The primary structure comprises 442 residues: Glutamyl-tRNA reductase (442 aa).

Substrate-binding positions include 49–52, Ser109, 114–116, and Gln120; these read TCNR and EGQ. Cys50 (nucleophile) is an active-site residue. 198-203 provides a ligand contact to NADP(+); the sequence is GAGRMA. The tract at residues 420-442 is disordered; sequence MAAAQRLFDLPGDDADRDRSDAK. Over residues 433–442 the composition is skewed to basic and acidic residues; it reads DADRDRSDAK.

The protein belongs to the glutamyl-tRNA reductase family. Homodimer.

It catalyses the reaction (S)-4-amino-5-oxopentanoate + tRNA(Glu) + NADP(+) = L-glutamyl-tRNA(Glu) + NADPH + H(+). It functions in the pathway porphyrin-containing compound metabolism; protoporphyrin-IX biosynthesis; 5-aminolevulinate from L-glutamyl-tRNA(Glu): step 1/2. The protein operates within porphyrin-containing compound metabolism; chlorophyll biosynthesis. Its function is as follows. Catalyzes the NADPH-dependent reduction of glutamyl-tRNA(Glu) to glutamate 1-semialdehyde (GSA). This chain is Glutamyl-tRNA reductase, found in Synechococcus sp. (strain RCC307).